A 434-amino-acid polypeptide reads, in one-letter code: tRNA modification GTPase MnmE (434 aa).

The (6S)-5-formyl-5,6,7,8-tetrahydrofolate site is built by Arg20, Glu79, and Val119. The TrmE-type G domain occupies 219 to 361; it reads GLRVVLAGRP…LQEKLVEIGK (143 aa). Residues 229–234, 248–254, and 273–276 each bind GTP; these read NAGKST, APIAGTT, and DTAG. Mg(2+)-binding residues include Ser233 and Thr254. Lys434 contacts (6S)-5-formyl-5,6,7,8-tetrahydrofolate.

It belongs to the TRAFAC class TrmE-Era-EngA-EngB-Septin-like GTPase superfamily. TrmE GTPase family. Homodimer. Heterotetramer of two MnmE and two MnmG subunits. K(+) is required as a cofactor.

It localises to the cytoplasm. In terms of biological role, exhibits a very high intrinsic GTPase hydrolysis rate. Involved in the addition of a carboxymethylaminomethyl (cmnm) group at the wobble position (U34) of certain tRNAs, forming tRNA-cmnm(5)s(2)U34. In Zymomonas mobilis subsp. mobilis (strain ATCC 31821 / ZM4 / CP4), this protein is tRNA modification GTPase MnmE.